The chain runs to 254 residues: Probable phosphatase TTE1963 (254 aa).

Zn(2+) contacts are provided by His-14, His-16, His-22, His-47, Glu-80, His-108, His-139, Asp-200, and His-202.

It belongs to the PHP family. It depends on Zn(2+) as a cofactor.

The sequence is that of Probable phosphatase TTE1963 from Caldanaerobacter subterraneus subsp. tengcongensis (strain DSM 15242 / JCM 11007 / NBRC 100824 / MB4) (Thermoanaerobacter tengcongensis).